A 555-amino-acid polypeptide reads, in one-letter code: 5'-nucleotidase-related protein (555 aa).

Residues 1–25 (MKSLIGTLGLYCLFILTNNVVSSYG) form the signal peptide. A divalent metal cation-binding residues include aspartate 38, histidine 40, and aspartate 91. Asparagine 105 carries N-linked (GlcNAc...) asparagine glycosylation. An a divalent metal cation-binding site is contributed by asparagine 123. Asparagine 198 carries an N-linked (GlcNAc...) asparagine glycan. 2 residues coordinate a divalent metal cation: histidine 225 and histidine 249. N-linked (GlcNAc...) asparagine glycosylation occurs at asparagine 295. AMP contacts are provided by arginine 358, arginine 402, and phenylalanine 421. N-linked (GlcNAc...) asparagine glycosylation is present at asparagine 465. Residues phenylalanine 505 and aspartate 511 each coordinate AMP.

It belongs to the 5'-nucleotidase family. Mg(2+) is required as a cofactor. The cofactor is Mn(2+). In terms of tissue distribution, salivary gland (at protein level). Saliva (at protein level).

It localises to the secreted. The enzyme catalyses a ribonucleoside 5'-triphosphate + 2 H2O = a ribonucleoside 5'-phosphate + 2 phosphate + 2 H(+). With respect to regulation, DEPC (2 mM), sodium fluoride (10 mM) and 4,4'-Diisothiocyano-2,2'-stilbenedisulfonic acid (DIDS, 100 uM) nearly completely abrogate activity. Concanavalin A enhances activity. Functionally, facilitates hematophagy by inhibiting ADP-dependent platelet aggregation and promoting disaggregation of ADP-stimulated platelets in the host. Cleaves adenosine triphosphate (ATP) and adenosine diphosphate (ADP) to adenosine monophosphate (AMP) and inorganic phosphate. Interacts with fibrinogen receptor integrin alpha-IIb/beta-3 (ITGA2B/ITGB3). This Glossina morsitans morsitans (Savannah tsetse fly) protein is 5'-nucleotidase-related protein.